The sequence spans 1088 residues: DNA-directed RNA polymerase subunit beta (1088 aa).

This sequence belongs to the RNA polymerase beta chain family. In plastids the minimal PEP RNA polymerase catalytic core is composed of four subunits: alpha, beta, beta', and beta''. When a (nuclear-encoded) sigma factor is associated with the core the holoenzyme is formed, which can initiate transcription.

The protein resides in the plastid. The protein localises to the chloroplast. It carries out the reaction RNA(n) + a ribonucleoside 5'-triphosphate = RNA(n+1) + diphosphate. DNA-dependent RNA polymerase catalyzes the transcription of DNA into RNA using the four ribonucleoside triphosphates as substrates. In Chlorokybus atmophyticus (Soil alga), this protein is DNA-directed RNA polymerase subunit beta.